We begin with the raw amino-acid sequence, 404 residues long: XK-related protein 8 (404 aa).

A run of 8 helical transmembrane segments spans residues 14–34 (FVFS…DVWL), 44–64 (VTWF…VQTF), 169–189 (AVQF…VVDY), 209–229 (LIYF…LALC), 232–252 (VLSG…ALWA), 262–282 (SVAG…FSWF), 293–313 (SAIY…TWWC), and 324–344 (ALAL…FKAL).

This sequence belongs to the XK family.

It localises to the cell membrane. The catalysed reaction is a 1,2-diacyl-sn-glycero-3-phospho-L-serine(in) = a 1,2-diacyl-sn-glycero-3-phospho-L-serine(out). Phospholipid scramblase that promotes phosphatidylserine exposure on apoptotic cell surface, possibly by mediating phospholipid scrambling. Phosphatidylserine is a specific marker only present at the surface of apoptotic cells and acts as a specific signal for engulfment. This chain is XK-related protein 8, found in Gasterosteus aculeatus (Three-spined stickleback).